A 367-amino-acid polypeptide reads, in one-letter code: Developmentally-regulated GTP-binding protein 1 (367 aa).

An N-acetylserine modification is found at S2. The required for interaction with STK16 stretch occupies residues 2–16; that stretch reads SSTLAKIAEIEAEMA. At K22 the chain carries (3S)-3-hydroxylysine. Residues 65 to 290 form the OBG-type G domain; sequence ARIGFVGFPS…LLEKIWDYLK (226 aa). GTP-binding positions include 71–78, 96–100, 117–120, 248–251, and 271–273; these read GFPSVGKS, FTTLT, DLPG, NKID, and SAH. S78 and T98 together coordinate Mg(2+). T100 carries the phosphothreonine; by STK16 modification. Positions 290–366 constitute a TGS domain; it reads KLVRIYTKPK…EDEDVIQIVK (77 aa).

It belongs to the TRAFAC class OBG-HflX-like GTPase superfamily. OBG GTPase family. In terms of assembly, interacts (via its C-terminal) with TAL1. Interacts with DFRP1/ZC3H15; this interaction prevents DRG1 poly-ubiquitination and degradation by proteasome. DRG1-ZC3H15/DFRP1 complex co-sediments with polysomes. Interacts with STK16. Interacts with JMJD7. Sumoylated by UBE2I in response to MEKK1-mediated stimuli. In terms of processing, hydroxylated (with S stereochemistry) at C-3 of Lys-22 by JMJD7. Post-translationally, phosphorylated at Thr-100 by STK16. Polyubiquitinated; this modification induces proteolytic degradation and is impaired by interaction with ZC3H15.

The protein localises to the nucleus. It localises to the cytoplasm. The catalysed reaction is GTP + H2O = GDP + phosphate + H(+). The GTPase activity is enhanced by potassium ions as well as by DFRP1 binding. In terms of biological role, catalyzes the conversion of GTP to GDP through hydrolysis of the gamma-phosphate bond in GTP. Appears to have an intrinsic GTPase activity that is stimulated by ZC3H15/DFRP1 binding likely by increasing the affinity for the potassium ions. When hydroxylated at C-3 of 'Lys-22' by JMJD7, may bind to RNA and play a role in translation. Binds to microtubules and promotes microtubule polymerization and bundling that are required for mitotic spindle assembly during prophase to anaphase transition. GTPase activity is not necessary for these microtubule-related functions. This Bos taurus (Bovine) protein is Developmentally-regulated GTP-binding protein 1 (DRG1).